Here is a 118-residue protein sequence, read N- to C-terminus: Large ribosomal subunit protein bL20 (118 aa).

The protein belongs to the bacterial ribosomal protein bL20 family.

Binds directly to 23S ribosomal RNA and is necessary for the in vitro assembly process of the 50S ribosomal subunit. It is not involved in the protein synthesizing functions of that subunit. This Leptothrix cholodnii (strain ATCC 51168 / LMG 8142 / SP-6) (Leptothrix discophora (strain SP-6)) protein is Large ribosomal subunit protein bL20.